A 66-amino-acid chain; its full sequence is Small ribosomal subunit protein bS21 (66 aa).

This sequence belongs to the bacterial ribosomal protein bS21 family.

This chain is Small ribosomal subunit protein bS21, found in Rickettsia peacockii (strain Rustic).